The primary structure comprises 368 residues: NAD(P)H-quinone oxidoreductase subunit 1, chloroplastic (368 aa).

Transmembrane regions (helical) follow at residues 11–31 (RVINLSFVLGFIKEIFGLIWI), 33–53 (IYILIPILGVLIGLLVIVWLE), 98–118 (WLFSIGPAIVVIPILSSYLVI), 131–151 (IGVFFRIAVSSIAPLGLLMAG), 177–197 (LALCVLSISLLSNSLGTVDIV), 205–225 (FWGWNLWRQPIGFIAFFISSL), 255–275 (FGLFYVASYLNLLASSLFVTI), 305–325 (VLGITMGILITLAKAYLFLFI), and 348–368 (FLLPIALGNLLLTASFQLLLL).

Belongs to the complex I subunit 1 family. NDH is composed of at least 16 different subunits, 5 of which are encoded in the nucleus.

It localises to the plastid. Its subcellular location is the chloroplast thylakoid membrane. The enzyme catalyses a plastoquinone + NADH + (n+1) H(+)(in) = a plastoquinol + NAD(+) + n H(+)(out). It catalyses the reaction a plastoquinone + NADPH + (n+1) H(+)(in) = a plastoquinol + NADP(+) + n H(+)(out). In terms of biological role, NDH shuttles electrons from NAD(P)H:plastoquinone, via FMN and iron-sulfur (Fe-S) centers, to quinones in the photosynthetic chain and possibly in a chloroplast respiratory chain. The immediate electron acceptor for the enzyme in this species is believed to be plastoquinone. Couples the redox reaction to proton translocation, and thus conserves the redox energy in a proton gradient. This is NAD(P)H-quinone oxidoreductase subunit 1, chloroplastic from Cycas taitungensis (Prince sago).